The primary structure comprises 622 residues: MDSTTKLAIGAIGIVFGDIGTSPLYAFRETFVGPNPLPIDYNHVLGVVSLIFWSMTLIVAIQYVTILMRADNKGQGGSLALVALISRSVRNTNYGWLVVLLGVFATSLFYGDSMITPAISVLSAVEGLVVVDPELQGFVIPIALVLLVGLFVLQKRGTAKVGALFAPVMIVYFTVIATLGLISIVQHPEILYALNPYYAVLFFINDGFLAFLALGSVVLAVTGSEALYSDMGHFGRGPMKLSWFGFVMPCLLLNYFGQGAMIVSLSGPEAQEAIQAPFFLLAPEMLRLPLVILATFATFIASQAVISGAFSITHQAIQLGFVPRLSVRHTSDAHSGQIYIPVINWALMVAVILLVLTFQNSSNLASAYGIAVTGAVTIDTLLMAVLLVGVWKWKWYYAAPVVIVFLIIDGAYFAANLTKVPDGGWFPLVVGLIVFTLLTTWARGRKLMRERMSEVALPIEIFAKSAHNSATRVPGTAIFMASSTAGVPSALLHNIKHNKVLHERVVILTVEISDIPYVDPAKRCEYSEIGQGIYRAILHYGFMEETNVPEGLKSMQQCGGEFDMMQTSFFLSRQTLLPSDKPGMPIWREKIFAWMLRNAATAMEFFGLPTNRVVELGSQVRI.

Transmembrane regions (helical) follow at residues 7 to 27 (LAIG…LYAF), 44 to 64 (VLGV…IQYV), 95 to 115 (GWLV…DSMI), 133 to 153 (PELQ…LFVL), 165 to 185 (FAPV…ISIV), 199 to 219 (AVLF…SVVL), 243 to 263 (WFGF…AMIV), 290 to 310 (LVIL…SGAF), 338 to 358 (IYIP…VLTF), 370 to 390 (IAVT…LVGV), 395 to 415 (WYYA…YFAA), and 422 to 442 (DGGW…TTWA).

The protein belongs to the HAK/KUP transporter (TC 2.A.72) family.

The protein resides in the cell inner membrane. The enzyme catalyses K(+)(in) + H(+)(in) = K(+)(out) + H(+)(out). Its function is as follows. Transport of potassium into the cell. Likely operates as a K(+):H(+) symporter. This is Probable potassium transport system protein Kup from Erythrobacter litoralis (strain HTCC2594).